A 312-amino-acid chain; its full sequence is 2,3-dihydroxyphenylpropionate/2,3-dihydroxicinnamic acid 1,2-dioxygenase 1 (312 aa).

The active-site Proton donor is the H115. Catalysis depends on H179, which acts as the Proton acceptor.

It belongs to the LigB/MhpB extradiol dioxygenase family. Homotetramer. Fe(2+) serves as cofactor.

It catalyses the reaction 3-(2,3-dihydroxyphenyl)propanoate + O2 = (2Z,4E)-2-hydroxy-6-oxonona-2,4-dienedioate + H(+). The enzyme catalyses (2E)-3-(2,3-dihydroxyphenyl)prop-2-enoate + O2 = (2Z,4E,7E)-2-hydroxy-6-oxonona-2,4,7-trienedioate + H(+). Its pathway is aromatic compound metabolism; 3-phenylpropanoate degradation. In terms of biological role, catalyzes the non-heme iron(II)-dependent oxidative cleavage of 2,3-dihydroxyphenylpropionic acid and 2,3-dihydroxicinnamic acid into 2-hydroxy-6-ketononadienedioate and 2-hydroxy-6-ketononatrienedioate, respectively. This is 2,3-dihydroxyphenylpropionate/2,3-dihydroxicinnamic acid 1,2-dioxygenase 1 from Dechloromonas aromatica (strain RCB).